A 240-amino-acid polypeptide reads, in one-letter code: Methylthioribulose-1-phosphate dehydratase (240 aa).

Cysteine 99 serves as a coordination point for substrate. Residues histidine 116 and histidine 118 each coordinate Zn(2+). Glutamate 145 functions as the Proton donor/acceptor in the catalytic mechanism. Histidine 201 is a Zn(2+) binding site.

The protein belongs to the aldolase class II family. MtnB subfamily. Zn(2+) serves as cofactor.

The protein localises to the cytoplasm. It carries out the reaction 5-(methylsulfanyl)-D-ribulose 1-phosphate = 5-methylsulfanyl-2,3-dioxopentyl phosphate + H2O. It functions in the pathway amino-acid biosynthesis; L-methionine biosynthesis via salvage pathway; L-methionine from S-methyl-5-thio-alpha-D-ribose 1-phosphate: step 2/6. Its function is as follows. Catalyzes the dehydration of methylthioribulose-1-phosphate (MTRu-1-P) into 2,3-diketo-5-methylthiopentyl-1-phosphate (DK-MTP-1-P). The chain is Methylthioribulose-1-phosphate dehydratase from Paracoccidioides lutzii (strain ATCC MYA-826 / Pb01) (Paracoccidioides brasiliensis).